Here is a 78-residue protein sequence, read N- to C-terminus: Sperm-specific protein Phi-0 (78 aa).

Composition is skewed to basic residues over residues 1–21 (MVAR…RSAA), 31–57 (AASR…KPKA), and 64–78 (VRRR…SVSK). Residues 1–78 (MVARRQTKKA…RRIRRASVSK (78 aa)) form a disordered region.

It is found in the nucleus. The protein localises to the chromosome. Functionally, involved in nuclear basic protein transition: histones are replaced by spermatid specific proteins which are themselves replaced by protamines in late spermatids. This is Sperm-specific protein Phi-0 from Holothuria tubulosa (Tubular sea cucumber).